A 399-amino-acid chain; its full sequence is Ribonuclease T2-like 1-A (399 aa).

A signal peptide spans 1–17 (MLSILSIAALLIATVQA). 5 cysteine pairs are disulfide-bonded: cysteine 24–cysteine 43, cysteine 32–cysteine 79, cysteine 42–cysteine 150, cysteine 87–cysteine 142, and cysteine 214–cysteine 249. Active-site residues include histidine 72, glutamate 135, and histidine 139. The segment at 259–279 (KGNSGANTLTTKTTGTTTSGS) is disordered. Low complexity predominate over residues 262–279 (SGANTLTTKTTGTTTSGS). Asparagine 291 is a glycosylation site (N-linked (GlcNAc...) asparagine).

It belongs to the RNase T2 family.

Its subcellular location is the vacuole lumen. The protein resides in the cytoplasm. It catalyses the reaction a ribonucleotidyl-ribonucleotide-RNA + H2O = a 3'-end 3'-phospho-ribonucleotide-RNA + a 5'-end dephospho-ribonucleoside-RNA + H(+). Rnase which modulates cell survival under stress conditions. Released from the vacuole to the cytoplasm during stress to promote tRNA and rRNA cleavage and to activate separately a downstream pathway that promotes cell death. Involved in cell size, vacuolar morphology and growth at high temperatures and high salt concentration. The polypeptide is Ribonuclease T2-like 1-A (RNY1-A) (Candida albicans (strain SC5314 / ATCC MYA-2876) (Yeast)).